The primary structure comprises 535 residues: Beta-amylase (535 aa).

A propeptide spans 1–2 (ME) (removed in mature form). Val-3 is modified (N-acetylvaline). Substrate contacts are provided by Asp-51, His-91, and Asp-99. Glu-184 serves as the catalytic Proton donor. The substrate site is built by Lys-293, His-298, and Thr-340. Glu-378 acts as the Proton acceptor in catalysis. Substrate is bound by residues 379–380 (NA) and Arg-418. 3 tandem repeats follow at residues 489–499 (GPTGGMGGQAE), 500–510 (GPTCGMGGQVK), and 511–521 (GPTGGMGGQAE). A 4 X 11 AA tandem repeats region spans residues 489 to 532 (GPTGGMGGQAEGPTCGMGGQVKGPTGGMGGQAEDPTSGMGGELP). A propeptide spans 490–535 (PTGGMGGQAEGPTCGMGGQVKGPTGGMGGQAEDPTSGMGGELPATM) (removed in mature form). Positions 513–535 (TGGMGGQAEDPTSGMGGELPATM) are disordered. The 4; approximate repeat unit spans residues 522–532 (DPTSGMGGELP).

The protein belongs to the glycosyl hydrolase 14 family. In terms of assembly, monomer. Endosperm.

It catalyses the reaction Hydrolysis of (1-&gt;4)-alpha-D-glucosidic linkages in polysaccharides so as to remove successive maltose units from the non-reducing ends of the chains.. Its function is as follows. Catalyzes the liberation of maltose from 1,4-alpha-D glucans. This chain is Beta-amylase, found in Hordeum vulgare subsp. spontaneum (Wild barley).